Reading from the N-terminus, the 538-residue chain is MEGSANQLQPLSETQVVNSEGGCVWQVTDMNRLRRFLCFGSEGGTYYIKEQKLGLENAEALIRLIEDGRGCEVIQEIKSFSQEGRTAKQEPLLFALAVCSQCADINTKQAAFKAVPEVCRIPTHLFTFIQFKKDLKESMKCGMWGRALRKAVADWYNEKGGMAVALVVTKYKQRNGWSHKDLLRLSHLKPSSEGLAIVTKYITKGWKEVHEEYKEKALSVEAEKLLKYLEAVEKVKRTKDDLEVIHLIEEHQLVREHLLTNHLKSKEVWKALLQEMPLTALLRNLGKMTANSVLEPGNSEVSLICEKLSNEKLLKKARIHPFHVLIALETYRAGHGLRGKLKWIPDKDILQALDAAFYTTFKTVEPTGKRFLLAVDVSASMNQRALGSVLNASTVAAAMCMVVTRTEKESSVVAFACDMVPFPVTTDMTLQQVLTAMNKVPAGNTDCSLPMIWAQKTDTAADVFVVFTDNETFAGQVHPAVALREYRKKMDIPAKLIVCGMTSNGFTIADPDDRGMLDMCGFDTAALDVIRNFTLDVI.

M1 is subject to N-acetylmethionine. S4 and S19 each carry phosphoserine. The 354-residue stretch at 16 to 369 (VVNSEGGCVW…TFKTVEPTGK (354 aa)) folds into the TROVE domain. The interval 120-284 (RIPTHLFTFI…EMPLTALLRN (165 aa)) is RNA-binding. Position 224 is an N6-acetyllysine (K224). A VWFA-like domain region spans residues 361 to 538 (FKTVEPTGKR…VIRNFTLDVI (178 aa)). Positions 378, 380, and 445 each coordinate a divalent metal cation.

It belongs to the Ro 60 kDa family. In terms of assembly, identified in a IGF2BP1-dependent mRNP granule complex containing untranslated mRNAs. Found in a complex with PUF60 and Y5 RNA. Interacts with RAB11FIP5. In terms of tissue distribution, highest in brain, followed by lung, muscle, kidney and heart. Lower levels are found in testis, liver and spleen.

Its subcellular location is the cytoplasm. Functionally, RNA-binding protein that binds to misfolded non-coding RNAs, pre-5S rRNA, and several small cytoplasmic RNA molecules known as Y RNAs. May play roles in cilia formation and/or maintenance. The sequence is that of RNA-binding protein Ro60 from Mus musculus (Mouse).